Reading from the N-terminus, the 348-residue chain is GTP 3',8-cyclase (348 aa).

Residues 24–242 (PFGRAVTYLR…EKQFTLTDID (219 aa)) enclose the Radical SAM core domain. R33 provides a ligand contact to GTP. [4Fe-4S] cluster is bound by residues C40 and C44. Residue Y46 coordinates S-adenosyl-L-methionine. C47 contributes to the [4Fe-4S] cluster binding site. Residue R82 participates in GTP binding. G86 contributes to the S-adenosyl-L-methionine binding site. T115 contacts GTP. S139 contacts S-adenosyl-L-methionine. GTP is bound at residue K175. M209 is an S-adenosyl-L-methionine binding site. The [4Fe-4S] cluster site is built by C272 and C275. Residue 277–279 (RVR) participates in GTP binding. C289 contacts [4Fe-4S] cluster.

This sequence belongs to the radical SAM superfamily. MoaA family. Monomer and homodimer. Requires [4Fe-4S] cluster as cofactor.

It catalyses the reaction GTP + AH2 + S-adenosyl-L-methionine = (8S)-3',8-cyclo-7,8-dihydroguanosine 5'-triphosphate + 5'-deoxyadenosine + L-methionine + A + H(+). Its pathway is cofactor biosynthesis; molybdopterin biosynthesis. Functionally, catalyzes the cyclization of GTP to (8S)-3',8-cyclo-7,8-dihydroguanosine 5'-triphosphate. The chain is GTP 3',8-cyclase from Rhizobium etli (strain CIAT 652).